The following is a 382-amino-acid chain: Anhydro-N-acetylmuramic acid kinase (382 aa).

Gly-22–Asp-29 lines the ATP pocket.

This sequence belongs to the anhydro-N-acetylmuramic acid kinase family.

The catalysed reaction is 1,6-anhydro-N-acetyl-beta-muramate + ATP + H2O = N-acetyl-D-muramate 6-phosphate + ADP + H(+). It functions in the pathway amino-sugar metabolism; 1,6-anhydro-N-acetylmuramate degradation. Its pathway is cell wall biogenesis; peptidoglycan recycling. Its function is as follows. Catalyzes the specific phosphorylation of 1,6-anhydro-N-acetylmuramic acid (anhMurNAc) with the simultaneous cleavage of the 1,6-anhydro ring, generating MurNAc-6-P. Is required for the utilization of anhMurNAc either imported from the medium or derived from its own cell wall murein, and thus plays a role in cell wall recycling. This is Anhydro-N-acetylmuramic acid kinase from Burkholderia orbicola (strain MC0-3).